Consider the following 296-residue polypeptide: NAD kinase (296 aa).

Catalysis depends on D72, which acts as the Proton acceptor. Residues 72–73 (DG), 146–147 (ND), R157, K174, D176, 187–192 (TAYALS), and Q247 contribute to the NAD(+) site.

It belongs to the NAD kinase family. Requires a divalent metal cation as cofactor.

The protein resides in the cytoplasm. The enzyme catalyses NAD(+) + ATP = ADP + NADP(+) + H(+). Functionally, involved in the regulation of the intracellular balance of NAD and NADP, and is a key enzyme in the biosynthesis of NADP. Catalyzes specifically the phosphorylation on 2'-hydroxyl of the adenosine moiety of NAD to yield NADP. The sequence is that of NAD kinase from Pseudomonas syringae pv. syringae (strain B728a).